Reading from the N-terminus, the 384-residue chain is MNVERTQELLVNMGPQHPSTHGVLRLMIKLDGEQVTWCEPDIGYLHRCFEKLAEQKTYPQVIPFTDRTDYLAAMLNELCYVEAVEKLFGDAIQVPERAQYIRVMLAELQRITSHLLALGSMAMDLGATTPFLYCWRDREKLYSLFERITGGRMLYNYLRIGGVRNDLPEGILGTPQDGEDKADKTIWGFINYFDSYVYPEWKALVTGNRIFQYRTKNIGVLTAEQAIAYSCSGAVLRGSGVKWDLRKNLPYAIYDRFEFDIPVGQNGDSFDRWWVRQEEMYQSSRIVKQCLEWLAENPGPVMAPKMPRVLKPPKGEVYHRIEGARGEVACYVVSDGSTNPYKVKWRSPAFTHLQLMPLLCPGHKIADIIAILGSIDVVLGEVDR.

It belongs to the complex I 49 kDa subunit family. In terms of assembly, NDH-1 is composed of 14 different subunits. Subunits NuoB, C, D, E, F, and G constitute the peripheral sector of the complex.

The protein localises to the cell membrane. The enzyme catalyses a quinone + NADH + 5 H(+)(in) = a quinol + NAD(+) + 4 H(+)(out). Functionally, NDH-1 shuttles electrons from NADH, via FMN and iron-sulfur (Fe-S) centers, to quinones in the respiratory chain. The immediate electron acceptor for the enzyme in this species is believed to be a menaquinone. Couples the redox reaction to proton translocation (for every two electrons transferred, four hydrogen ions are translocated across the cytoplasmic membrane), and thus conserves the redox energy in a proton gradient. This Symbiobacterium thermophilum (strain DSM 24528 / JCM 14929 / IAM 14863 / T) protein is NADH-quinone oxidoreductase subunit D 2.